Here is a 79-residue protein sequence, read N- to C-terminus: Small ribosomal subunit protein bS16c (79 aa).

The protein belongs to the bacterial ribosomal protein bS16 family.

The protein localises to the plastid. Its subcellular location is the chloroplast. The chain is Small ribosomal subunit protein bS16c from Thalassiosira pseudonana (Marine diatom).